Reading from the N-terminus, the 250-residue chain is 2,3-bisphosphoglycerate-dependent phosphoglycerate mutase (250 aa).

Residues 8-15 (RHGESTWN), 21-22 (TG), R60, 87-90 (ERHY), K98, and 114-115 (RR) contribute to the substrate site. Residue H9 is the Tele-phosphohistidine intermediate of the active site. The Proton donor/acceptor role is filled by E87. Positions 116-135 (SYDTPPPPLAANDPRSERSD) are disordered. A substrate-binding site is contributed by 183–184 (GN).

This sequence belongs to the phosphoglycerate mutase family. BPG-dependent PGAM subfamily. Homodimer.

The catalysed reaction is (2R)-2-phosphoglycerate = (2R)-3-phosphoglycerate. It participates in carbohydrate degradation; glycolysis; pyruvate from D-glyceraldehyde 3-phosphate: step 3/5. Its function is as follows. Catalyzes the interconversion of 2-phosphoglycerate and 3-phosphoglycerate. The chain is 2,3-bisphosphoglycerate-dependent phosphoglycerate mutase from Polaromonas naphthalenivorans (strain CJ2).